A 448-amino-acid polypeptide reads, in one-letter code: Glucan 1,3-beta-glucosidase I/II (448 aa).

A signal peptide spans 1–19; the sequence is MLSLKTLLCTLLTVSSVLA. A propeptide spanning residues 20–40 is cleaved from the precursor; that stretch reads TPVPARDPSSIQFVHEENKKR. N-linked (GlcNAc...) asparagine glycosylation occurs at N165. E232 (proton donor) is an active-site residue. The N-linked (GlcNAc...) asparagine glycan is linked to N325. E334 serves as the catalytic Nucleophile.

It belongs to the glycosyl hydrolase 5 (cellulase A) family.

The protein resides in the secreted. It localises to the cell wall. It catalyses the reaction Successive hydrolysis of beta-D-glucose units from the non-reducing ends of (1-&gt;3)-beta-D-glucans, releasing alpha-glucose.. In terms of biological role, glucanases possibly play a role in cell expansion during growth, in cell-cell fusion during mating, and in spore release during sporulation. This enzyme hydrolyzes both 1,3-beta- and 1,6-beta-linkages and even has beta-glucosidase activity. It could also function biosynthetically as a transglycosylase. This Saccharomyces cerevisiae (strain ATCC 204508 / S288c) (Baker's yeast) protein is Glucan 1,3-beta-glucosidase I/II (EXG1).